Reading from the N-terminus, the 803-residue chain is Translation initiation factor IF-2 (803 aa).

Disordered regions lie at residues 93-123 (TKPV…LNEK) and 138-206 (EVKE…ASAK). Positions 111 to 121 (VPPTSDTTNLN) are enriched in polar residues. Residues 138–155 (EVKEEAKKTPSEKKETPK) are compositionally biased toward basic and acidic residues. A compositionally biased stretch (basic residues) spans 156–167 (KGPRKETRRSRK). Residues 168–188 (PDKEDKWEREELHMTKLVEER) are compositionally biased toward basic and acidic residues. The tr-type G domain maps to 302–471 (PRAPVVTIMG…LLQAEVLELK (170 aa)). Residues 311–318 (GHVDHGKT) form a G1 region. 311 to 318 (GHVDHGKT) serves as a coordination point for GTP. The G2 stretch occupies residues 336-340 (GITQH). Positions 357 to 360 (DTPG) are G3. Residues 357–361 (DTPGH) and 411–414 (NKID) each bind GTP. The segment at 411-414 (NKID) is G4. The G5 stretch occupies residues 447 to 449 (SAK).

The protein belongs to the TRAFAC class translation factor GTPase superfamily. Classic translation factor GTPase family. IF-2 subfamily.

Its subcellular location is the cytoplasm. One of the essential components for the initiation of protein synthesis. Protects formylmethionyl-tRNA from spontaneous hydrolysis and promotes its binding to the 30S ribosomal subunits. Also involved in the hydrolysis of GTP during the formation of the 70S ribosomal complex. This is Translation initiation factor IF-2 from Coxiella burnetii (strain RSA 493 / Nine Mile phase I).